The primary structure comprises 369 residues: Tyrosyl-DNA phosphodiesterase 2 (369 aa).

The segment at 58–77 (EKTEVTGNKRKDDTAEASGT) is disordered. Positions 59-71 (KTEVTGNKRKDDT) are enriched in basic and acidic residues. The interval 129-133 (NVDGL) is interaction with 5' end of substrate DNA. Positions 131 and 161 each coordinate Mg(2+). The interaction with 5' end of substrate DNA stretch occupies residues 235 to 240 (HLESCK). The Proton donor/acceptor role is filled by Asp-271. Positions 273 to 275 (NLR) are interaction with 5' end of substrate DNA.

Belongs to the CCR4/nocturin family. TTRAP/TDP2 subfamily. Mg(2+) serves as cofactor. The cofactor is Mn(2+). As to expression, expressed ubiquitously during blastula stages and throughout gastrulation. Shortly after shield formation, expressed weakly in dorsal forerunner cells (DFCs). Between somite stages 5 and 9, expressed in the tailbud and around the Kupffer's vesicle at a higher level than the more uniform expression in the embryo.

It is found in the nucleus. The protein resides in the PML body. Functionally, DNA repair enzyme that can remove a variety of covalent adducts from DNA through hydrolysis of a 5'-phosphodiester bond, giving rise to DNA with a free 5' phosphate. Catalyzes the hydrolysis of dead-end complexes between DNA and the topoisomerase 2 (top2) active site tyrosine residue. Hydrolyzes 5'-phosphoglycolates on protruding 5' ends on DNA double-strand breaks (DSBs) due to DNA damage by radiation and free radicals. Controls gastrulation movements and left/right (L/R) axis determination via smad3-mediated regulation of cdh1/e-cadherin. Regulates the formation of Kupffer's vesicle, a signaling center essential for establishing L/R asymmetry. Modulates smad3 activity through modulating nodal-acvr1/akt4 signaling. The protein is Tyrosyl-DNA phosphodiesterase 2 (tdp2) of Danio rerio (Zebrafish).